A 188-amino-acid chain; its full sequence is Peptide deformylase (188 aa).

2 residues coordinate Fe cation: C94 and H136. E137 is a catalytic residue. A Fe cation-binding site is contributed by H140.

It belongs to the polypeptide deformylase family. Requires Fe(2+) as cofactor.

The enzyme catalyses N-terminal N-formyl-L-methionyl-[peptide] + H2O = N-terminal L-methionyl-[peptide] + formate. Removes the formyl group from the N-terminal Met of newly synthesized proteins. Requires at least a dipeptide for an efficient rate of reaction. N-terminal L-methionine is a prerequisite for activity but the enzyme has broad specificity at other positions. This is Peptide deformylase from Pelodictyon phaeoclathratiforme (strain DSM 5477 / BU-1).